Consider the following 211-residue polypeptide: ATP-dependent Clp protease proteolytic subunit (211 aa).

Catalysis depends on Ser-106, which acts as the Nucleophile. His-131 is a catalytic residue.

This sequence belongs to the peptidase S14 family. In terms of assembly, fourteen ClpP subunits assemble into 2 heptameric rings which stack back to back to give a disk-like structure with a central cavity, resembling the structure of eukaryotic proteasomes.

It is found in the cytoplasm. It catalyses the reaction Hydrolysis of proteins to small peptides in the presence of ATP and magnesium. alpha-casein is the usual test substrate. In the absence of ATP, only oligopeptides shorter than five residues are hydrolyzed (such as succinyl-Leu-Tyr-|-NHMec, and Leu-Tyr-Leu-|-Tyr-Trp, in which cleavage of the -Tyr-|-Leu- and -Tyr-|-Trp bonds also occurs).. Cleaves peptides in various proteins in a process that requires ATP hydrolysis. Has a chymotrypsin-like activity. Plays a major role in the degradation of misfolded proteins. The sequence is that of ATP-dependent Clp protease proteolytic subunit from Rhodopseudomonas palustris (strain BisA53).